The sequence spans 400 residues: Argininosuccinate synthase (400 aa).

Residues 10–18 and Ala38 each bind ATP; that span reads AYSGGVDTS. Tyr89 contacts L-citrulline. ATP is bound at residue Gly119. Residues Thr121, Asn125, and Asp126 each coordinate L-aspartate. Asn125 contributes to the L-citrulline binding site. L-citrulline-binding residues include Arg129, Ser177, Ser186, Glu262, and Tyr274.

This sequence belongs to the argininosuccinate synthase family. Type 1 subfamily. As to quaternary structure, homotetramer.

The protein localises to the cytoplasm. It catalyses the reaction L-citrulline + L-aspartate + ATP = 2-(N(omega)-L-arginino)succinate + AMP + diphosphate + H(+). Its pathway is amino-acid biosynthesis; L-arginine biosynthesis; L-arginine from L-ornithine and carbamoyl phosphate: step 2/3. The protein is Argininosuccinate synthase of Nostoc punctiforme (strain ATCC 29133 / PCC 73102).